We begin with the raw amino-acid sequence, 508 residues long: Light-independent protochlorophyllide reductase subunit B (508 aa).

D36 contacts [4Fe-4S] cluster. D294 acts as the Proton donor in catalysis. 429-430 lines the substrate pocket; the sequence is GM.

The protein belongs to the ChlB/BchB/BchZ family. In terms of assembly, protochlorophyllide reductase is composed of three subunits; ChlL, ChlN and ChlB. Forms a heterotetramer of two ChlB and two ChlN subunits. [4Fe-4S] cluster serves as cofactor.

The protein localises to the plastid. It localises to the chloroplast. It catalyses the reaction chlorophyllide a + oxidized 2[4Fe-4S]-[ferredoxin] + 2 ADP + 2 phosphate = protochlorophyllide a + reduced 2[4Fe-4S]-[ferredoxin] + 2 ATP + 2 H2O. Its pathway is porphyrin-containing compound metabolism; chlorophyll biosynthesis (light-independent). Component of the dark-operative protochlorophyllide reductase (DPOR) that uses Mg-ATP and reduced ferredoxin to reduce ring D of protochlorophyllide (Pchlide) to form chlorophyllide a (Chlide). This reaction is light-independent. The NB-protein (ChlN-ChlB) is the catalytic component of the complex. This chain is Light-independent protochlorophyllide reductase subunit B, found in Pyropia yezoensis (Susabi-nori).